The following is a 359-amino-acid chain: Histamine H2 receptor (359 aa).

Over Met1 to Ser22 the chain is Extracellular. A glycan (N-linked (GlcNAc...) asparagine) is linked at Asn4. Residues Val23 to Gly44 traverse the membrane as a helical segment. The Cytoplasmic portion of the chain corresponds to Leu45–Ile57. Residues Val58 to Ser81 traverse the membrane as a helical segment. Residues Cys82–Asn92 lie on the Extracellular side of the membrane. Cys91 and Cys174 are joined by a disulfide. Residues Ile93–Leu114 traverse the membrane as a helical segment. The Cytoplasmic segment spans residues Asp115–Arg134. The chain crosses the membrane as a helical span at residues Val135–Asn159. The Extracellular segment spans residues Ser160–Glu180. A helical membrane pass occupies residues Val181–Arg204. Residues Ile205–Val234 are Cytoplasmic-facing. A helical transmembrane segment spans residues Thr235–Gly258. Topologically, residues Leu259–Glu267 are extracellular. The chain crosses the membrane as a helical span at residues Val268–Ala289. Residues Ala290–Arg359 lie on the Cytoplasmic side of the membrane. Cys305 is lipidated: S-palmitoyl cysteine.

It belongs to the G-protein coupled receptor 1 family.

Its subcellular location is the cell membrane. In terms of biological role, the H2 subclass of histamine receptors mediates gastric acid secretion. The activity of this receptor is mediated by G proteins which activate adenylyl cyclase. The sequence is that of Histamine H2 receptor (HRH2) from Cavia porcellus (Guinea pig).